The sequence spans 1145 residues: Nucleolar protein 6 (1145 aa).

Positions 1–46 are disordered; sequence MQKKRNRAGPPQQEAASDDGEMSDSSDKMEVAQGKGKSAVKRAPDA.

It belongs to the NRAP family. Part of the small subunit (SSU) processome, composed of more than 70 proteins and the RNA chaperone small nucleolar RNA (snoRNA) U3.

Its subcellular location is the nucleus. It localises to the nucleolus. The protein resides in the chromosome. Functionally, part of the small subunit (SSU) processome, first precursor of the small eukaryotic ribosomal subunit. During the assembly of the SSU processome in the nucleolus, many ribosome biogenesis factors, an RNA chaperone and ribosomal proteins associate with the nascent pre-rRNA and work in concert to generate RNA folding, modifications, rearrangements and cleavage as well as targeted degradation of pre-ribosomal RNA by the RNA exosome. The chain is Nucleolar protein 6 (nol6) from Xenopus tropicalis (Western clawed frog).